A 430-amino-acid chain; its full sequence is tRNA(Ile)-lysidine synthase (430 aa).

21–26 (SGGLDS) lines the ATP pocket.

It belongs to the tRNA(Ile)-lysidine synthase family.

The protein localises to the cytoplasm. The enzyme catalyses cytidine(34) in tRNA(Ile2) + L-lysine + ATP = lysidine(34) in tRNA(Ile2) + AMP + diphosphate + H(+). In terms of biological role, ligates lysine onto the cytidine present at position 34 of the AUA codon-specific tRNA(Ile) that contains the anticodon CAU, in an ATP-dependent manner. Cytidine is converted to lysidine, thus changing the amino acid specificity of the tRNA from methionine to isoleucine. This chain is tRNA(Ile)-lysidine synthase, found in Salmonella paratyphi B (strain ATCC BAA-1250 / SPB7).